Consider the following 234-residue polypeptide: Ubiquinone biosynthesis O-methyltransferase (234 aa).

4 residues coordinate S-adenosyl-L-methionine: R39, G59, D80, and M124.

The protein belongs to the methyltransferase superfamily. UbiG/COQ3 family.

It carries out the reaction a 3-demethylubiquinol + S-adenosyl-L-methionine = a ubiquinol + S-adenosyl-L-homocysteine + H(+). The enzyme catalyses a 3-(all-trans-polyprenyl)benzene-1,2-diol + S-adenosyl-L-methionine = a 2-methoxy-6-(all-trans-polyprenyl)phenol + S-adenosyl-L-homocysteine + H(+). It functions in the pathway cofactor biosynthesis; ubiquinone biosynthesis. Functionally, O-methyltransferase that catalyzes the 2 O-methylation steps in the ubiquinone biosynthetic pathway. The protein is Ubiquinone biosynthesis O-methyltransferase of Aliivibrio fischeri (strain MJ11) (Vibrio fischeri).